We begin with the raw amino-acid sequence, 492 residues long: Glycerol kinase 1 (492 aa).

Thr-10 serves as a coordination point for ADP. Residues Thr-10 and Ser-11 each contribute to the ATP site. Thr-10 is a sn-glycerol 3-phosphate binding site. Lys-14 contributes to the ADP binding site. Residues Arg-80, Glu-81, Tyr-132, and Asp-241 each contribute to the sn-glycerol 3-phosphate site. Glycerol is bound by residues Arg-80, Glu-81, Tyr-132, and Asp-241. ADP contacts are provided by Thr-263, Gly-306, Gly-407, and Asn-411. 3 residues coordinate ATP: Thr-263, Gly-306, and Gly-407.

Belongs to the FGGY kinase family.

It carries out the reaction glycerol + ATP = sn-glycerol 3-phosphate + ADP + H(+). It participates in polyol metabolism; glycerol degradation via glycerol kinase pathway; sn-glycerol 3-phosphate from glycerol: step 1/1. Its activity is regulated as follows. Inhibited by fructose 1,6-bisphosphate (FBP). Functionally, key enzyme in the regulation of glycerol uptake and metabolism. Catalyzes the phosphorylation of glycerol to yield sn-glycerol 3-phosphate. The chain is Glycerol kinase 1 from Thermotoga maritima (strain ATCC 43589 / DSM 3109 / JCM 10099 / NBRC 100826 / MSB8).